The chain runs to 466 residues: 3-isopropylmalate dehydratase large subunit (466 aa).

The [4Fe-4S] cluster site is built by Cys347, Cys407, and Cys410.

It belongs to the aconitase/IPM isomerase family. LeuC type 1 subfamily. Heterodimer of LeuC and LeuD. It depends on [4Fe-4S] cluster as a cofactor.

It catalyses the reaction (2R,3S)-3-isopropylmalate = (2S)-2-isopropylmalate. The protein operates within amino-acid biosynthesis; L-leucine biosynthesis; L-leucine from 3-methyl-2-oxobutanoate: step 2/4. Functionally, catalyzes the isomerization between 2-isopropylmalate and 3-isopropylmalate, via the formation of 2-isopropylmaleate. This chain is 3-isopropylmalate dehydratase large subunit, found in Shewanella sediminis (strain HAW-EB3).